The following is a 71-amino-acid chain: Gas vesicle protein A (71 aa).

The tract at residues 12–22 (LAEVIDRILDK) is alpha helix 1. The interval 23–32 (GIVIDAWVRV) is beta-strand 1. Residues 33-36 (SLVG) form a beta turn region. The segment at 37–46 (IELLAIEARI) is beta-strand 2. Positions 47–70 (VIASVETYLKYAEAVGLTQSAAVP) are alpha helix 2.

It belongs to the gas vesicle GvpA family. In terms of assembly, the gas vesicle shell is 2 nm thick and consists of a single layer of this protein. It forms helical ribs nearly perpendicular to the long axis of the vesicle.

It is found in the gas vesicle shell. Functionally, gas vesicles (GV) are hollow, gas filled proteinaceous nanostructures found in some microorganisms. During planktonic growth they allow positioning of the organism at a favorable depth for light or nutrient acquisition. GVs are highly permeable to gas. GvpA forms the protein shell. The ratio of GvpA:GvpC is estimated to be 33:1 and more recently 25:1. The sequence is that of Gas vesicle protein A from Dolichospermum flosaquae (Anabaena flos-aquae).